Here is a 276-residue protein sequence, read N- to C-terminus: Plant cysteine oxidase 2 (276 aa).

A disordered region spans residues 1-40 (MGTDTVMSGRVRKDLSKTNPNGNIPENRSNSRKKIQRRSK). The span at 17-28 (KTNPNGNIPENR) shows a compositional bias: polar residues. Positions 30–40 (NSRKKIQRRSK) are enriched in basic residues. Fe cation-binding residues include His-134, His-136, and His-197.

The protein belongs to the cysteine dioxygenase family. The cofactor is Fe(2+).

The protein localises to the nucleus. It localises to the cytoplasm. It carries out the reaction L-cysteine + O2 = 3-sulfino-L-alanine + H(+). In terms of biological role, catalyzes the oxidation of N-terminal cysteine residues (N-Cys), thus preparing the protein for N-end rule pathway-mediated proteasomal degradation, upstream of the N-end rule enzymes ATE1, ATE2 and PRT6. Controls the preparation of the group VII ethylene response factor (ERF-VII) proteins for degradation via the 26S proteasome N-end rule pathway. Acts as an oxygen sensor that controls the stability of ERF-VII proteins, which are stabilized in flooding-induced hypoxia, and regulate transcriptional adaptation to these adverse conditions. Not active on Cys located inside or at the C-terminus of a peptide. Acts redundantly with PCO1 to repress the anaerobic response. This is Plant cysteine oxidase 2 from Arabidopsis thaliana (Mouse-ear cress).